Here is a 116-residue protein sequence, read N- to C-terminus: Ribosome-binding factor A (116 aa).

Belongs to the RbfA family. As to quaternary structure, monomer. Binds 30S ribosomal subunits, but not 50S ribosomal subunits or 70S ribosomes.

Its subcellular location is the cytoplasm. One of several proteins that assist in the late maturation steps of the functional core of the 30S ribosomal subunit. Associates with free 30S ribosomal subunits (but not with 30S subunits that are part of 70S ribosomes or polysomes). Required for efficient processing of 16S rRNA. May interact with the 5'-terminal helix region of 16S rRNA. In Streptococcus pneumoniae (strain Hungary19A-6), this protein is Ribosome-binding factor A.